The following is a 346-amino-acid chain: Coproporphyrin III ferrochelatase (346 aa).

2 residues coordinate Fe-coproporphyrin III: Ser-52 and Tyr-121. Fe(2+) is bound by residues His-181 and Glu-264.

It belongs to the ferrochelatase family.

It localises to the cytoplasm. It catalyses the reaction Fe-coproporphyrin III + 2 H(+) = coproporphyrin III + Fe(2+). Its pathway is porphyrin-containing compound metabolism; protoheme biosynthesis. In terms of biological role, involved in coproporphyrin-dependent heme b biosynthesis. Catalyzes the insertion of ferrous iron into coproporphyrin III to form Fe-coproporphyrin III. This Mycobacterium sp. (strain KMS) protein is Coproporphyrin III ferrochelatase.